Here is a 449-residue protein sequence, read N- to C-terminus: Protein cortex (449 aa).

WD repeat units lie at residues 108-148, 149-188, 198-237, 283-327, 345-382, and 386-425; these read TYSY…ISQG, YAEY…KIDS, NRNC…ISWR, DSDW…VRDT, TGEL…DQWG, and SGLD…KKMK. The D-box motif lies at 386 to 397; it reads SGLDRVRTMVFS.

This sequence belongs to the WD repeat CORT family.

It is found in the cytoplasm. Functionally, controls wing pigmentation patterning by regulating scale cell development, thereby playing a key role in mimicry and crypsis. Probably acts as an activator of the anaphase promoting complex/cyclosome (APC/C) that promotes the ubiquitin ligase activity and substrate specificity of the APC/C. In Heliconius erato (Crimson patched longwing butterfly), this protein is Protein cortex.